A 417-amino-acid chain; its full sequence is MKAVVLGSGVVGLMSAWYLQKAGYQVTVVDRQARSAEETSFANAGQISYGYSSPWAAPGIPQKALRWLMEEHAPLKIKPSLDPQLLKWATQMLANCQLSRYQVNKARMLAIANHSRECLSQLRQEHDIEYQGRQQGTLQVFRTQKQLIAIEKDIALLEQSGTRYQRMSVDECIKQEPGLAAVSHKLTGGLYLPDDETGDCYLFCQQMTELAQQQGVTFLFNTNVKKVNTQGNQVVSVSTDAGELQADVYVVAMGSYSTALLAKLGITIPVYPVKGYSLTVPITDESQAPVSTVMDETYKVALTRFDDRIRVAGTAELAGFDPAIPEKRKATISMVVNDLFPHSGDFAKAEFWTGFRPMTPDGTPLIGKTPLKNLYTNTGHGTLGWTMACGSGHLLSQIITGEQSENPAGLDLFRYAS.

Residue 3–17 (AVVLGSGVVGLMSAW) participates in FAD binding.

Belongs to the DadA oxidoreductase family. The cofactor is FAD.

The catalysed reaction is a D-alpha-amino acid + A + H2O = a 2-oxocarboxylate + AH2 + NH4(+). Functionally, oxidative deamination of D-amino acids. The protein is D-amino acid dehydrogenase of Vibrio vulnificus (strain CMCP6).